Consider the following 488-residue polypeptide: 3-octaprenyl-4-hydroxybenzoate carboxy-lyase (488 aa).

N172 is a binding site for Mn(2+). Prenylated FMN-binding positions include 175–177 (IYR), 189–191 (RWL), and 194–195 (RG). E238 contributes to the Mn(2+) binding site. The active-site Proton donor is D287.

Belongs to the UbiD family. In terms of assembly, homohexamer. Requires prenylated FMN as cofactor. Mn(2+) is required as a cofactor.

Its subcellular location is the cell membrane. It catalyses the reaction a 4-hydroxy-3-(all-trans-polyprenyl)benzoate + H(+) = a 2-(all-trans-polyprenyl)phenol + CO2. The protein operates within cofactor biosynthesis; ubiquinone biosynthesis. Catalyzes the decarboxylation of 3-octaprenyl-4-hydroxy benzoate to 2-octaprenylphenol, an intermediate step in ubiquinone biosynthesis. This Legionella pneumophila (strain Corby) protein is 3-octaprenyl-4-hydroxybenzoate carboxy-lyase.